A 729-amino-acid polypeptide reads, in one-letter code: DNA topoisomerase 3 (729 aa).

The Toprim domain occupies 3–136 (KSVVIAEKPS…IKRLWISSVT (134 aa)). Mg(2+)-binding residues include E9 and D105. Residues 153–594 (YDNLYASAVA…EMKNYTKEIV (442 aa)) form the Topo IA-type catalytic domain. The tract at residues 187–192 (NCGRVQ) is interaction with DNA. Y310 serves as the catalytic O-(5'-phospho-DNA)-tyrosine intermediate. Positions 686-713 (ERRKKESGNKADKRDVQKYMKQQKKEEE) are enriched in basic and acidic residues. A disordered region spans residues 686-718 (ERRKKESGNKADKRDVQKYMKQQKKEEEPLNNP).

This sequence belongs to the type IA topoisomerase family. It depends on Mg(2+) as a cofactor.

It catalyses the reaction ATP-independent breakage of single-stranded DNA, followed by passage and rejoining.. In terms of biological role, releases the supercoiling and torsional tension of DNA, which is introduced during the DNA replication and transcription, by transiently cleaving and rejoining one strand of the DNA duplex. Introduces a single-strand break via transesterification at a target site in duplex DNA. The scissile phosphodiester is attacked by the catalytic tyrosine of the enzyme, resulting in the formation of a DNA-(5'-phosphotyrosyl)-enzyme intermediate and the expulsion of a 3'-OH DNA strand. The free DNA strand then undergoes passage around the unbroken strand, thus removing DNA supercoils. Finally, in the religation step, the DNA 3'-OH attacks the covalent intermediate to expel the active-site tyrosine and restore the DNA phosphodiester backbone. The polypeptide is DNA topoisomerase 3 (Bacillus thuringiensis subsp. konkukian (strain 97-27)).